A 353-amino-acid chain; its full sequence is MTATLERRESASIWGRFCNWVTSTENRLNIGWFGVLMIPTLLTATSVFIIAFIAAPPVDIDGIREPVSGSLLYGNNIISGAIIPTSAAIGLHFYPIWEAASVDEWLYNGGPYELIVLHFLLGVACYMGREWELSYRLGMRPWIAVAYSAPVAAATAVFLIYPIGQGSFSDGMPLGISGTFNFMIVFQAEHNILMHPFHMLGVAGVFGGSLFSAMHGSLVTSSLIRETTENESANAGYKFGQEQETYNIVAAHGYFGRLIFQYASFNNSRSLHFFLAAWPVVGIWFTALGISTMAFNLNGFNFNQSVVDSQGRVINTWADIINRANLGMEVMHERNAHNFPLDLAAVEAPAVNG.

Thr-2 is modified (N-acetylthreonine). Residue Thr-2 is modified to Phosphothreonine. 3 helical membrane passes run Asn-29–Ser-46, His-118–Leu-133, and Trp-142–Ala-156. Position 118 (His-118) interacts with chlorophyll a. Tyr-126 contributes to the pheophytin a binding site. [CaMn4O5] cluster-binding residues include Asp-170 and Glu-189. Residues Phe-197–Leu-218 form a helical membrane-spanning segment. His-198 is a chlorophyll a binding site. A quinone is bound by residues His-215 and Ser-264–Phe-265. Residue His-215 coordinates Fe cation. Residue His-272 participates in Fe cation binding. The helical transmembrane segment at Phe-274 to Leu-288 threads the bilayer. 4 residues coordinate [CaMn4O5] cluster: His-332, Glu-333, Asp-342, and Ala-344. Positions Ala-345–Gly-353 are excised as a propeptide.

The protein belongs to the reaction center PufL/M/PsbA/D family. In terms of assembly, PSII is composed of 1 copy each of membrane proteins PsbA, PsbB, PsbC, PsbD, PsbE, PsbF, PsbH, PsbI, PsbJ, PsbK, PsbL, PsbM, PsbT, PsbX, PsbY, PsbZ, Psb30/Ycf12, at least 3 peripheral proteins of the oxygen-evolving complex and a large number of cofactors. It forms dimeric complexes. The D1/D2 heterodimer binds P680, chlorophylls that are the primary electron donor of PSII, and subsequent electron acceptors. It shares a non-heme iron and each subunit binds pheophytin, quinone, additional chlorophylls, carotenoids and lipids. D1 provides most of the ligands for the Mn4-Ca-O5 cluster of the oxygen-evolving complex (OEC). There is also a Cl(-1) ion associated with D1 and D2, which is required for oxygen evolution. The PSII complex binds additional chlorophylls, carotenoids and specific lipids. serves as cofactor. Post-translationally, tyr-161 forms a radical intermediate that is referred to as redox-active TyrZ, YZ or Y-Z. In terms of processing, C-terminally processed by CTPA; processing is essential to allow assembly of the oxygen-evolving complex and thus photosynthetic growth.

It localises to the plastid. The protein resides in the chloroplast thylakoid membrane. The enzyme catalyses 2 a plastoquinone + 4 hnu + 2 H2O = 2 a plastoquinol + O2. Photosystem II (PSII) is a light-driven water:plastoquinone oxidoreductase that uses light energy to abstract electrons from H(2)O, generating O(2) and a proton gradient subsequently used for ATP formation. It consists of a core antenna complex that captures photons, and an electron transfer chain that converts photonic excitation into a charge separation. The D1/D2 (PsbA/PsbD) reaction center heterodimer binds P680, the primary electron donor of PSII as well as several subsequent electron acceptors. This chain is Photosystem II protein D1, found in Dumortiera hirsuta (Liverwort).